The following is a 496-amino-acid chain: Glycylpeptide N-tetradecanoyltransferase 1 (496 aa).

Residues 1 to 81 form a disordered region; that stretch reads MADESETAVK…DSTQDQPVKM (81 aa). Phosphoserine is present on residues serine 31 and serine 47. Basic residues predominate over residues 55 to 66; sequence KKKKKKQKKKKE. At serine 83 the chain carries Phosphoserine. Tetradecanoyl-CoA is bound by residues glutamine 118, phenylalanine 119, tryptophan 120, phenylalanine 247, leucine 248, cysteine 249, valine 250, serine 256, arginine 258, valine 259, and alanine 260.

It belongs to the NMT family.

Its subcellular location is the cytoplasm. The protein localises to the cytosol. The protein resides in the membrane. It catalyses the reaction N-terminal glycyl-[protein] + tetradecanoyl-CoA = N-tetradecanoylglycyl-[protein] + CoA + H(+). The enzyme catalyses N-terminal glycyl-L-lysyl-[protein] + tetradecanoyl-CoA = N-terminal glycyl-(N(6)-tetradecanoyl)-L-lysyl-[protein] + CoA + H(+). Adds a myristoyl group to the N-terminal glycine residue of certain cellular and viral proteins. Also able to mediate N-terminal lysine myristoylation of proteins: catalyzes myristoylation of ARF6 on both 'Gly-2' and 'Lys-3'. Lysine myristoylation is required to maintain ARF6 on membranes during the GTPase cycle. The polypeptide is Glycylpeptide N-tetradecanoyltransferase 1 (Nmt1) (Rattus norvegicus (Rat)).